The primary structure comprises 109 residues: MVIVYLAIACGLGALVRYFFSRYNQASKLPLGTLIANLLGCFLIGVFYNHVESKEVYAILATGFCGGLTTFSTLNDELQRLLSDKKVFYSYLTLTYIGGLVAIFLGILL.

4 helical membrane-spanning segments follow: residues 1–21, 29–49, 55–75, and 87–107; these read MVIVYLAIACGLGALVRYFFS, LPLGTLIANLLGCFLIGVFYN, EVYAILATGFCGGLTTFSTLN, and VFYSYLTLTYIGGLVAIFLGI. Na(+) contacts are provided by Gly-66 and Thr-69.

This sequence belongs to the fluoride channel Fluc/FEX (TC 1.A.43) family.

The protein resides in the cell membrane. The catalysed reaction is fluoride(in) = fluoride(out). With respect to regulation, na(+) is not transported, but it plays an essential structural role and its presence is essential for fluoride channel function. Its function is as follows. Fluoride-specific ion channel. Important for reducing fluoride concentration in the cell, thus reducing its toxicity. This is Fluoride-specific ion channel FluC 1 from Streptococcus pneumoniae serotype 4 (strain ATCC BAA-334 / TIGR4).